The sequence spans 304 residues: Ornithine carbamoyltransferase (304 aa).

Carbamoyl phosphate is bound by residues 47–50, arginine 98, and 125–128; these read STRT and HPCQ. L-ornithine contacts are provided by residues asparagine 156, aspartate 221, and 225-226; that span reads SM. Residues 262–263 and arginine 290 contribute to the carbamoyl phosphate site; that span reads CL.

This sequence belongs to the aspartate/ornithine carbamoyltransferase superfamily. OTCase family.

It localises to the cytoplasm. The enzyme catalyses carbamoyl phosphate + L-ornithine = L-citrulline + phosphate + H(+). Its pathway is amino-acid biosynthesis; L-arginine biosynthesis; L-arginine from L-ornithine and carbamoyl phosphate: step 1/3. Its function is as follows. Reversibly catalyzes the transfer of the carbamoyl group from carbamoyl phosphate (CP) to the N(epsilon) atom of ornithine (ORN) to produce L-citrulline. This chain is Ornithine carbamoyltransferase, found in Methanococcus maripaludis (strain C5 / ATCC BAA-1333).